The primary structure comprises 302 residues: Ribosomal RNA small subunit methyltransferase H (302 aa).

S-adenosyl-L-methionine contacts are provided by residues Gly-32–His-34, Asp-51, Phe-78, Asp-97, and Gln-104.

The protein belongs to the methyltransferase superfamily. RsmH family.

The protein localises to the cytoplasm. The enzyme catalyses cytidine(1402) in 16S rRNA + S-adenosyl-L-methionine = N(4)-methylcytidine(1402) in 16S rRNA + S-adenosyl-L-homocysteine + H(+). Its function is as follows. Specifically methylates the N4 position of cytidine in position 1402 (C1402) of 16S rRNA. The protein is Ribosomal RNA small subunit methyltransferase H of Nitratiruptor sp. (strain SB155-2).